Here is a 113-residue protein sequence, read N- to C-terminus: Dolichyl-diphosphooligosaccharide--protein glycosyltransferase subunit dad-1 (113 aa).

The Cytoplasmic segment spans residues 1–32 (MAAQVVPVLSKLFDDYQKTTSSKLKIIDAYMT). The helical transmembrane segment at 33–53 (YILFTGIFQFIYCLLVGTFPF) threads the bilayer. At 54–55 (NS) the chain is on the lumenal side. The chain crosses the membrane as a helical span at residues 56 to 78 (FLSGFISTVTSFVLASCLRMQVN). Residues 79 to 92 (QENRSEFTAVSTER) lie on the Cytoplasmic side of the membrane. The helical transmembrane segment at 93-113 (AFADFIFANLILHLVVVNFLG) threads the bilayer.

Belongs to the DAD/OST2 family. As to quaternary structure, component of the oligosaccharyltransferase (OST) complex.

It localises to the endoplasmic reticulum membrane. It functions in the pathway protein modification; protein glycosylation. In terms of biological role, subunit of the oligosaccharyl transferase (OST) complex that catalyzes the initial transfer of a defined glycan (Glc(3)Man(9)GlcNAc(2) in eukaryotes) from the lipid carrier dolichol-pyrophosphate to an asparagine residue within an Asn-X-Ser/Thr consensus motif in nascent polypeptide chains, the first step in protein N-glycosylation. N-glycosylation occurs cotranslationally and the complex associates with the Sec61 complex at the channel-forming translocon complex that mediates protein translocation across the endoplasmic reticulum (ER). All subunits are required for a maximal enzyme activity. Possesses cell death-inhibiting activity. Suppresses some programmed cell death in C.elegans. The polypeptide is Dolichyl-diphosphooligosaccharide--protein glycosyltransferase subunit dad-1 (Caenorhabditis elegans).